The primary structure comprises 199 residues: dITP/XTP pyrophosphatase (199 aa).

Substrate is bound at residue 7–12 (TSNRGK). The active-site Proton acceptor is D74. A Mg(2+)-binding site is contributed by D74. Substrate is bound by residues S75, 156-159 (FGYD), K179, and 184-185 (HR).

The protein belongs to the HAM1 NTPase family. Homodimer. It depends on Mg(2+) as a cofactor.

The enzyme catalyses XTP + H2O = XMP + diphosphate + H(+). The catalysed reaction is dITP + H2O = dIMP + diphosphate + H(+). It carries out the reaction ITP + H2O = IMP + diphosphate + H(+). In terms of biological role, pyrophosphatase that catalyzes the hydrolysis of nucleoside triphosphates to their monophosphate derivatives, with a high preference for the non-canonical purine nucleotides XTP (xanthosine triphosphate), dITP (deoxyinosine triphosphate) and ITP. Seems to function as a house-cleaning enzyme that removes non-canonical purine nucleotides from the nucleotide pool, thus preventing their incorporation into DNA/RNA and avoiding chromosomal lesions. This is dITP/XTP pyrophosphatase from Sulfurimonas denitrificans (strain ATCC 33889 / DSM 1251) (Thiomicrospira denitrificans (strain ATCC 33889 / DSM 1251)).